The sequence spans 269 residues: Xyloglucan endotransglucosylase/hydrolase protein 24 (269 aa).

The N-terminal stretch at 1-21 (MSPFKIFFFTTLLVAAFSVSA) is a signal peptide. Residues 22–212 (ADFNTDVNVA…WSKAPFMASY (191 aa)) enclose the GH16 domain. The active-site Nucleophile is the glutamate 98. Glutamate 102 (proton donor) is an active-site residue. Glutamate 102 contributes to the xyloglucan binding site. N-linked (GlcNAc...) asparagine glycosylation occurs at asparagine 106. Xyloglucan-binding positions include 115 to 117 (HTN), 125 to 127 (DKE), 191 to 192 (DW), glycine 196, and arginine 256. The cysteines at positions 251 and 265 are disulfide-linked.

Belongs to the glycosyl hydrolase 16 family. XTH group 2 subfamily. Contains at least one intrachain disulfide bond essential for its enzymatic activity. In terms of processing, N-glycosylated; essential for its enzymatic activity. As to expression, highly expressed. Predominantly expressed in stems. Expressed in shoot apical meristems, also found in seedlings and meristems.

The protein resides in the secreted. Its subcellular location is the cell wall. It localises to the extracellular space. It is found in the apoplast. It catalyses the reaction breaks a beta-(1-&gt;4) bond in the backbone of a xyloglucan and transfers the xyloglucanyl segment on to O-4 of the non-reducing terminal glucose residue of an acceptor, which can be a xyloglucan or an oligosaccharide of xyloglucan.. In terms of biological role, catalyzes xyloglucan endohydrolysis (XEH) and/or endotransglycosylation (XET). Cleaves and religates xyloglucan polymers, an essential constituent of the primary cell wall, and thereby participates in cell wall construction of growing tissues. May be required during development to modify the walls of cells under mechanical stress. This chain is Xyloglucan endotransglucosylase/hydrolase protein 24 (XTH24), found in Arabidopsis thaliana (Mouse-ear cress).